The chain runs to 271 residues: MSAPRLLISIIIMVSASSSSCMGGKQMTQNYSTIFAEGNISQPVLMDINAVLCCPPIALRNLIIITWEIILRGQPSCTKAYKKETNETKETNCTVERITWVSRPDQNSDLQIRPVDTTHDGYYRGIVVTPDGNFHRGYHLQVLVTPEVNLFQSRNITAVCKAVTGKPAAQISWIPEGSILATKQEYWGNGTVTVKSTCPWEGHKSTVTCHVSHLTGNKSLSVKLNSGLRTSGSPALSLLIILYVKLSLFVVILVTTGFVFFQRINHVRKVL.

An N-terminal signal peptide occupies residues 1–23; it reads MSAPRLLISIIIMVSASSSSCMG. The Extracellular segment spans residues 24 to 239; that stretch reads GKQMTQNYST…TSGSPALSLL (216 aa). N-linked (GlcNAc...) asparagine glycosylation is found at Asn30, Asn39, Asn86, Asn92, Asn189, and Asn217. Positions 46–132 constitute an Ig-like V-type domain; it reads MDINAVLCCP…YRGIVVTPDG (87 aa). An Ig-like C2-type domain is found at 133–221; sequence NFHRGYHLQV…SHLTGNKSLS (89 aa). A disulfide bridge connects residues Cys160 and Cys209. Residues 240-260 traverse the membrane as a helical segment; that stretch reads IILYVKLSLFVVILVTTGFVF. At 261–271 the chain is on the cytoplasmic side; that stretch reads FQRINHVRKVL.

Belongs to the CD200R family.

Its subcellular location is the membrane. Functionally, may be a receptor for the CD200/OX2 cell surface glycoprotein. The polypeptide is Cell surface glycoprotein CD200 receptor 2 (CD200R1L) (Homo sapiens (Human)).